The following is a 244-amino-acid chain: uncharacterized protein (244 aa).

Helical transmembrane passes span 5-27, 37-59, 87-106, 116-138, 159-181, and 196-218; these read KFAL…LLAV, IVMV…SRFL, LVFI…FYYG, LSLF…FFVA, FWIW…VQPS, and GVFN…RMVA.

It localises to the cell membrane. This is an uncharacterized protein from Archaeoglobus fulgidus (strain ATCC 49558 / DSM 4304 / JCM 9628 / NBRC 100126 / VC-16).